The chain runs to 531 residues: Cation transporter HKT1;3 (531 aa).

The Cytoplasmic segment spans residues 1 to 46 (MNHCLVVSHKKLQTFRTFAASKFSSFTKSAQKSIKYSFQFIYQNNP). 2 helical membrane-spanning segments follow: residues 47–67 (LFVHVAYFALISFAGYGSLKV) and 108–128 (LWVLTILMLIGGEVFTSMLGI). Residues 129–190 (HFMRAEFGTK…GGHVEPKTIK (62 aa)) lie on the Cytoplasmic side of the membrane. The next 2 membrane-spanning stretches (helical) occupy residues 191-211 (FLGFVVMGYLLITNLGGSLLI) and 264-284 (ILLLLILPQILAGNTLFAPCL). Residues 285–321 (RLMVWSLEKITGKKDCRYILEYPKAIGYKHLMSTRES) lie on the Cytoplasmic side of the membrane. 2 helical membrane passes run 322-342 (VYLTLTVVSLIILQTVLFLSL) and 383-403 (SAILVLYTIMMYLPGYTSFLP). Residues 404 to 421 (RHDGEDSKTEKINKRKGL) are Cytoplasmic-facing. 2 helical membrane passes run 422–442 (LENWIFSHMSYLAIFVMLICI) and 494–514 (YGFAGKWSDNGKAILIIVMLF). Residues 515–530 (GRLKTFNMKGGRAWKL) lie on the Cytoplasmic side of the membrane.

This sequence belongs to the TrkH potassium transport family. HKT (TC 2.A.38.3) subfamily. As to quaternary structure, interacts with CNIH1. As to expression, weakly expressed. In roots, expressed in epidermis, exodermis, cortex, and sieve elements and companion cells of phloem. In mature leaves, expressed in large highly vacuolated cells of the adaxial epidermis, phloem and xylem.

It localises to the endoplasmic reticulum membrane. Its subcellular location is the golgi apparatus membrane. It carries out the reaction Na(+)(in) = Na(+)(out). Its function is as follows. Functions as a highly-selective sodium transporter. Does not seem to function as sodium-potassium cotransporter. May be involved in turgor changes for rolling and unrolling of leaves in response to environmental variations. This is Cation transporter HKT1;3 from Oryza sativa subsp. japonica (Rice).